Here is a 462-residue protein sequence, read N- to C-terminus: ATP synthase subunit beta (462 aa).

151 to 158 (GGAGVGKT) serves as a coordination point for ATP.

This sequence belongs to the ATPase alpha/beta chains family. In terms of assembly, F-type ATPases have 2 components, CF(1) - the catalytic core - and CF(0) - the membrane proton channel. CF(1) has five subunits: alpha(3), beta(3), gamma(1), delta(1), epsilon(1). CF(0) has three main subunits: a(1), b(2) and c(9-12). The alpha and beta chains form an alternating ring which encloses part of the gamma chain. CF(1) is attached to CF(0) by a central stalk formed by the gamma and epsilon chains, while a peripheral stalk is formed by the delta and b chains.

It is found in the cell inner membrane. The enzyme catalyses ATP + H2O + 4 H(+)(in) = ADP + phosphate + 5 H(+)(out). Functionally, produces ATP from ADP in the presence of a proton gradient across the membrane. The catalytic sites are hosted primarily by the beta subunits. In Chlorobium limicola, this protein is ATP synthase subunit beta.